A 375-amino-acid chain; its full sequence is Trans-enoyl reductase iccB (375 aa).

Val-48 to Lys-51 contacts NADP(+). Position 143-150 (Ala-143–Leu-150) interacts with substrate. Residues Ser-204–Ser-207, Tyr-222, and Leu-269–Asp-270 each bind NADP(+). Position 289 to 293 (Thr-289 to Phe-293) interacts with substrate. An NADP(+)-binding site is contributed by Ile-358–Lys-359.

This sequence belongs to the zinc-containing alcohol dehydrogenase family. In terms of assembly, monomer.

The enzyme catalyses N-[(4E,6E,10S,12Z,14E)-6,10-dimethyl-3-oxohexadeca-4,6,12,14-tetraenoyl]-L-tyrosyl-[ACP] = (3E,5S)-3-[(2E,4E,8S,10E,12Z)-1-hydroxy-4,8-dimethyltetradeca-2,4,10,12-tetraen-1-ylidene]-5-[(4-hydroxyphenyl)methyl]pyrrolidine-2,4-dione + holo-[ACP] + H(+). Its pathway is mycotoxin biosynthesis. Its function is as follows. Trans-enoyl reductase; part of the gene cluster that mediates the biosynthesis of ilicicolin H, a 4-hydroxy-2-pyridonealkaloid that has potent and broad antifungal activities by inhibiting the mitochondrial respiration chain. IccB collaborates with the hybrid PKS-NRPS synthetase iccA to assemble the backbone of ilicicolin H. The PKS portion of iccA and trans-acting enoyl reductase iccB work together to construct an octaketide, and two methyl groups are introduced by the MT domain of iccA during the chain assembly. The nascent chain is then condensed with tyrosine, catalyzed by the iliA C domain, and the resulting PKS-NRPS hybrid is offloaded by the iliA RED domain to form an advanced tetramic acid intermediate. The biosynthesis of ilicicolin H starts with formation of the tetramic acid by the hybrid PKS-NRPS synthetase iccA with the partnering trans-enoyl reductase iccB since iccA lacks a designated enoylreductase (ER) domain. The cytochrome P450 monooxygenase iccC then catalyzes the ring expansion of the tetramate to the acyclic 2-pyridone. The pericyclase iccD further converts the acyclic 2-pyridone into 8-epi-ilicicolin H. Finally, the epimerase iccE converts 8-epi-ilicicolin H into ilicicolin H via epimerization. IccA to iccE are sufficient for ilicicolin H biosynthesis and the roles of the remaining enzymes, iccF, iccG and iccH within the pathway have still to be determined. This is Trans-enoyl reductase iccB from Talaromyces variabilis (Penicillium variabile).